The primary structure comprises 330 residues: 2-alkyl-3-oxoalkanoate reductase (330 aa).

The active-site Proton acceptor is Tyr139. Residue Lys143 participates in NADP(+) binding.

Belongs to the 3-beta-HSD family. As to quaternary structure, homodimer.

It carries out the reaction a (2R,3S)-2-alkyl-3-hydroxyalkanoate + NADP(+) = an (R)-2-alkyl-3-oxoalkanoate + NADPH + H(+). Functionally, involved in olefin biosynthesis. Catalyzes the reversible stereospecific NADPH-dependent reduction of 2-alkyl-3-oxoalkanoic acids to 2-alkyl-3-hydroxyalkanoic acids. In the oxidative direction, syn-2-decyl-3-hydroxytetradecanoic acid is the preferred substrate. In the reductive direction, (2R/S)-2-hexyl-3-ketodecanoic acid is accepted as substrate. This Stenotrophomonas maltophilia (strain K279a) protein is 2-alkyl-3-oxoalkanoate reductase.